Here is a 104-residue protein sequence, read N- to C-terminus: uncharacterized protein (104 aa).

An N-terminal signal peptide occupies residues 1-18 (MGVEGMWNVFLFSLQVAA). N27 is a glycosylation site (N-linked (GlcNAc...) asparagine; by host).

This is an uncharacterized protein from Fowl adenovirus A serotype 1 (strain CELO / Phelps) (FAdV-1).